The primary structure comprises 186 residues: Large ribosomal subunit protein bL12c (186 aa).

Polar residues predominate over residues 1 to 11 (MASTLSTITLR). The disordered stretch occupies residues 1-24 (MASTLSTITLRSPSPSTATSTHAS). The N-terminal 53 residues, 1–53 (MASTLSTITLRSPSPSTATSTHASIPFPKKTLEFPIRTPKLQNRRATFLRPLA), are a transit peptide targeting the chloroplast. The span at 12–24 (SPSPSTATSTHAS) shows a compositional bias: low complexity.

Belongs to the bacterial ribosomal protein bL12 family.

It localises to the plastid. Its subcellular location is the chloroplast. The chain is Large ribosomal subunit protein bL12c from Nicotiana sylvestris (Wood tobacco).